A 193-amino-acid chain; its full sequence is 3-isopropylmalate dehydratase small subunit (193 aa).

This sequence belongs to the LeuD family. LeuD type 1 subfamily. In terms of assembly, heterodimer of LeuC and LeuD.

The enzyme catalyses (2R,3S)-3-isopropylmalate = (2S)-2-isopropylmalate. It participates in amino-acid biosynthesis; L-leucine biosynthesis; L-leucine from 3-methyl-2-oxobutanoate: step 2/4. In terms of biological role, catalyzes the isomerization between 2-isopropylmalate and 3-isopropylmalate, via the formation of 2-isopropylmaleate. In Bacillus cytotoxicus (strain DSM 22905 / CIP 110041 / 391-98 / NVH 391-98), this protein is 3-isopropylmalate dehydratase small subunit.